The chain runs to 534 residues: Corneodesmosin (534 aa).

The signal sequence occupies residues 1–32; sequence MGLSRAPWMGRVGGRGMMALLLAGLLLPGTLA. Disordered regions lie at residues 38 to 252 and 396 to 497; these read FSDP…HSVS and CSPF…GSAG. Composition is skewed to low complexity over residues 64 to 82, 107 to 185, 200 to 236, 397 to 415, and 431 to 446; these read GFSSYSGSSGSGSSISSAS, GYSQ…SGSA, SQLGQSSSFSQTSGQRVSSNQRPCSSDIPDSPCSGGP, SPFSSRVHSSSSISSSSGS, and PGTGSFSSSSSSQSSG. A compositionally biased stretch (polar residues) spans 454 to 472; sequence GSKSSSSGHPCMSVSSLTL.

It is found in the secreted. Important for the epidermal barrier integrity. The protein is Corneodesmosin (CDSN) of Macaca mulatta (Rhesus macaque).